A 209-amino-acid polypeptide reads, in one-letter code: Large ribosomal subunit protein uL3 (209 aa).

A disordered region spans residues 118–151 (GFQGAIKRHGQSRGPMSHGSRYHRRPGSMGPVAP).

It belongs to the universal ribosomal protein uL3 family. In terms of assembly, part of the 50S ribosomal subunit. Forms a cluster with proteins L14 and L19.

Its function is as follows. One of the primary rRNA binding proteins, it binds directly near the 3'-end of the 23S rRNA, where it nucleates assembly of the 50S subunit. This is Large ribosomal subunit protein uL3 from Enterococcus faecalis (strain ATCC 700802 / V583).